We begin with the raw amino-acid sequence, 1473 residues long: Sulfite reductase [NADPH] subunit beta (1473 aa).

Positions 728–876 (LTILFASDGG…AYNLWEPELW (149 aa)) constitute a Flavodoxin-like domain. [4Fe-4S] cluster is bound by residues C1328, C1334, C1373, and C1377. C1377 is a binding site for siroheme.

Belongs to the nitrite and sulfite reductase 4Fe-4S domain family. Alpha(2)-beta(2). The alpha component is a flavoprotein, the beta component is a hemoprotein. The cofactor is siroheme. [4Fe-4S] cluster is required as a cofactor.

The protein localises to the cytoplasm. It catalyses the reaction hydrogen sulfide + 3 NADP(+) + 3 H2O = sulfite + 3 NADPH + 4 H(+). It participates in sulfur metabolism; hydrogen sulfide biosynthesis; hydrogen sulfide from sulfite (NADPH route): step 1/1. Its function is as follows. Catalyzes the reduction of sulfite to sulfide, one of several activities required for the biosynthesis of L-cysteine from sulfate. This is Sulfite reductase [NADPH] subunit beta (sir1) from Schizosaccharomyces pombe (strain 972 / ATCC 24843) (Fission yeast).